A 540-amino-acid chain; its full sequence is Phosphatidylinositol 4-phosphate 5-kinase type-1 beta (540 aa).

A disordered region spans residues 1-23 (MSSVTENGDVTAGKPNEEKTYKK). The 371-residue stretch at 25–395 (TSSAIKGAIQ…RFLKFMNTRV (371 aa)) folds into the PIPK domain.

The protein localises to the cytoplasm. The protein resides in the cytosol. It is found in the cell membrane. It localises to the endomembrane system. It catalyses the reaction a 1,2-diacyl-sn-glycero-3-phospho-(1D-myo-inositol 4-phosphate) + ATP = a 1,2-diacyl-sn-glycero-3-phospho-(1D-myo-inositol-4,5-bisphosphate) + ADP + H(+). The catalysed reaction is 1-octadecanoyl-2-(5Z,8Z,11Z,14Z)-eicosatetraenoyl-sn-glycero-3-phospho-1D-myo-inositol 4-phosphate + ATP = 1-octadecanoyl-2-(5Z,8Z,11Z,14Z)-eicosatetraenoyl-sn-glycero-3-phospho-1D-myo-inositol 4,5-bisphosphate + ADP + H(+). It carries out the reaction 1-octadecanoyl-2-(9Z)-octadecenoyl-sn-glycero-3-phospho-1D-myo-inositol 4-phosphate + ATP = 1-octadecanoyl-2-(9Z)-octadecenoyl-sn-glycero-3-phospho-1D-myo-inositol 4,5-bisphosphate + ADP + H(+). The enzyme catalyses 1-octadecanoyl-2-(9Z)-octadecenoyl-sn-glycero-3-phospho-1D-myo-inositol + ATP = 1-octadecanoyl-2-(9Z)-octadecenoyl-sn-glycero-3-phospho-1D-myo-inositol 5-phosphate + ADP + H(+). It catalyses the reaction 1-octadecanoyl-2-(9Z,12Z)-octadecadienoyl-sn-glycero-3-phospho-1D-myo-inositol + ATP = 1-octadecanoyl-2-(9Z,12Z)-octadecadienoyl-sn-glycero-3-phospho-1D-myo-inositol 5-phosphate + ADP + H(+). The catalysed reaction is 1-octadecanoyl-2-(5Z,8Z,11Z,14Z-eicosatetraenoyl)-sn-glycero-3-phospho-(1D-myo-inositol) + ATP = 1-octadecanoyl-2-(5Z,8Z,11Z,14Z)-eicosatetraenoyl-sn-glycero-3-phospho-1D-myo-inositol 5-phosphate + ADP + H(+). It carries out the reaction 1,2-di-(9Z,12Z)-octadecadienoyl-sn-glycero-3-phospho-1D-myo-inositol + ATP = 1,2-di(9Z,12Z)-octadecadienoyl-sn-glycero-3-phospho-1D-myo-inositol 5-phosphate + ADP + H(+). Its function is as follows. Catalyzes the phosphorylation of phosphatidylinositol 4-phosphate (PtdIns(4)P/PI4P) to form phosphatidylinositol 4,5-bisphosphate (PtdIns(4,5)P2/PIP2), a lipid second messenger that regulates several cellular processes such as signal transduction, vesicle trafficking, actin cytoskeleton dynamics, cell adhesion, and cell motility. PtdIns(4,5)P2 can directly act as a second messenger or can be utilized as a precursor to generate other second messengers: inositol 1,4,5-trisphosphate (IP3), diacylglycerol (DAG) or phosphatidylinositol-3,4,5-trisphosphate (PtdIns(3,4,5)P3/PIP3). The sequence is that of Phosphatidylinositol 4-phosphate 5-kinase type-1 beta (PIP5K1B) from Gallus gallus (Chicken).